Consider the following 78-residue polypeptide: Defensin-like protein 90 (78 aa).

Positions 1–25 (MTTKMFSYVLLHSLMMFAIILSSMG) are cleaved as a signal peptide. 4 disulfide bridges follow: Cys33–Cys70, Cys38–Cys59, Cys44–Cys68, and Cys48–Cys69.

This sequence belongs to the DEFL family.

It localises to the secreted. This chain is Defensin-like protein 90, found in Arabidopsis thaliana (Mouse-ear cress).